The sequence spans 517 residues: Steroid 17-alpha-hydroxylase/17,20 lyase (517 aa).

Cysteine 451 contacts heme.

Belongs to the cytochrome P450 family. Heme serves as cofactor.

It is found in the membrane. The enzyme catalyses a C21-steroid + reduced [NADPH--hemoprotein reductase] + O2 = a 17alpha-hydroxy-C21-steroid + oxidized [NADPH--hemoprotein reductase] + H2O + H(+). It catalyses the reaction 17alpha-hydroxyprogesterone + reduced [NADPH--hemoprotein reductase] + O2 = androst-4-ene-3,17-dione + acetate + oxidized [NADPH--hemoprotein reductase] + H2O + 2 H(+). It carries out the reaction 17alpha-hydroxypregnenolone + reduced [NADPH--hemoprotein reductase] + O2 = 3beta-hydroxyandrost-5-en-17-one + acetate + oxidized [NADPH--hemoprotein reductase] + H2O + 2 H(+). It participates in lipid metabolism; steroid biosynthesis. In terms of biological role, conversion of pregnenolone and progesterone to their 17-alpha-hydroxylated products and subsequently to dehydroepiandrosterone (DHEA) and androstenedione. Catalyzes both the 17-alpha-hydroxylation and the 17,20-lyase reaction. In Oryzias latipes (Japanese rice fish), this protein is Steroid 17-alpha-hydroxylase/17,20 lyase (cyp17a1).